The sequence spans 83 residues: RNA-binding protein Hfq (83 aa).

Positions 10 to 70 constitute a Sm domain; the sequence is DAFLNQLRKE…ISTVSPSRPV (61 aa).

It belongs to the Hfq family. As to quaternary structure, homohexamer.

Functionally, RNA chaperone that binds small regulatory RNA (sRNAs) and mRNAs to facilitate mRNA translational regulation in response to envelope stress, environmental stress and changes in metabolite concentrations. Also binds with high specificity to tRNAs. The polypeptide is RNA-binding protein Hfq (Desulforudis audaxviator (strain MP104C)).